The following is a 250-amino-acid chain: Probable dihydroorotate dehydrogenase B (NAD(+)), electron transfer subunit (250 aa).

The FAD-binding FR-type domain maps to 1–89; it reads MINLKIEENV…RGPYGNGFDV (89 aa). Residues C200, C205, C208, and C216 each contribute to the [2Fe-2S] cluster site.

Belongs to the PyrK family. As to quaternary structure, heterotetramer of 2 PyrK and 2 PyrD type B subunits. [2Fe-2S] cluster serves as cofactor. Requires FAD as cofactor.

Its pathway is pyrimidine metabolism; UMP biosynthesis via de novo pathway; orotate from (S)-dihydroorotate (NAD(+) route): step 1/1. In terms of biological role, responsible for channeling the electrons from the oxidation of dihydroorotate from the FMN redox center in the PyrD type B subunit to the ultimate electron acceptor NAD(+). This is Probable dihydroorotate dehydrogenase B (NAD(+)), electron transfer subunit from Thermoplasma volcanium (strain ATCC 51530 / DSM 4299 / JCM 9571 / NBRC 15438 / GSS1).